We begin with the raw amino-acid sequence, 372 residues long: Cyanuric acid amidohydrolase (372 aa).

An RU A region spans residues 1–105 (MPTTLRRAHV…IVFEAREVDE (105 aa)). Substrate contacts are provided by residues Arg-56 and 84 to 85 (SG). The RU B stretch occupies residues 115–252 (SLALGRARTP…HEIMVAGMSR (138 aa)). Lys-165 is a catalytic residue. Substrate-binding positions include Arg-197 and 235-236 (SG). The active-site Nucleophile is the Ser-235. The tract at residues 258–372 (LAIDHGVMRD…GPVAIIVERT (115 aa)) is RU C. Glu-305 contacts Mg(2+). Substrate is bound by residues Arg-332 and 351-352 (SG). Ala-354, Gln-357, Gly-358, Pro-359, and Gly-362 together coordinate Mg(2+).

It belongs to the cyclic amide hydrolase (CyAH) family. Homotetramer.

It carries out the reaction cyanurate + H2O = 1-carboxybiuret + H(+). It participates in xenobiotic degradation; atrazine degradation; biuret from cyanurate: step 1/1. Its activity is regulated as follows. Inhibited by barbituric acid. Functionally, responsible for the hydrolysis of cyanuric acid, an intermediate formed during catabolism of s-triazine based compounds in herbicides such as atrazine and polymers such as melamine. Catalyzes the hydrolytic opening of the s-triazine ring of cyanuric acid (2,4,6-trihydroxy-s-triazine) to yield carbon dioxide and carboxybiuret, which spontaneously decarboxylates to biuret. In Bradyrhizobium sp. (strain ORS 375), this protein is Cyanuric acid amidohydrolase.